Reading from the N-terminus, the 233-residue chain is 28 kDa ribonucleoprotein, chloroplastic (233 aa).

Polar residues predominate over residues 1–16 (CVAQTSEWEQEGSTNA). The segment at 1–52 (CVAQTSEWEQEGSTNAVLEGESDPEGAVSWGSETQVSDEGGVEGGQGFSEPP) is disordered. 2 RRM domains span residues 55 to 133 (AKLF…KAAP) and 149 to 227 (CRVY…VAEE).

It localises to the plastid. The protein localises to the chloroplast. Its function is as follows. Probably involved in the 3'-end processing of chloroplast mRNA's. This chain is 28 kDa ribonucleoprotein, chloroplastic, found in Spinacia oleracea (Spinach).